A 482-amino-acid polypeptide reads, in one-letter code: Bifunctional protein GlmU (482 aa).

Residues 1-238 are pyrophosphorylase; it reads MSATSPAAVV…HREILGINNR (238 aa). UDP-N-acetyl-alpha-D-glucosamine-binding positions include 12–15, lysine 26, glutamine 79, and 84–85; these read LAAG and GT. Residue aspartate 110 coordinates Mg(2+). 4 residues coordinate UDP-N-acetyl-alpha-D-glucosamine: glycine 147, glutamate 163, asparagine 178, and asparagine 236. A Mg(2+)-binding site is contributed by asparagine 236. Positions 239–259 are linker; that stretch reads LQLAEARRLLNERLLERAMLA. The interval 260–482 is N-acetyltransferase; the sequence is GVTVVDPAST…ASSQETDGQS (223 aa). Arginine 341 and lysine 359 together coordinate UDP-N-acetyl-alpha-D-glucosamine. Histidine 371 functions as the Proton acceptor in the catalytic mechanism. Positions 374 and 385 each coordinate UDP-N-acetyl-alpha-D-glucosamine. Residues alanine 388, 394–395, serine 413, alanine 431, and arginine 448 contribute to the acetyl-CoA site; that span reads NY. Residues 458-482 form a disordered region; sequence VARKRPGSAAAQAAQASSQETDGQS. Over residues 465 to 476 the composition is skewed to low complexity; it reads SAAAQAAQASSQ.

This sequence in the N-terminal section; belongs to the N-acetylglucosamine-1-phosphate uridyltransferase family. In the C-terminal section; belongs to the transferase hexapeptide repeat family. As to quaternary structure, homotrimer. It depends on Mg(2+) as a cofactor.

The protein resides in the cytoplasm. The catalysed reaction is alpha-D-glucosamine 1-phosphate + acetyl-CoA = N-acetyl-alpha-D-glucosamine 1-phosphate + CoA + H(+). The enzyme catalyses N-acetyl-alpha-D-glucosamine 1-phosphate + UTP + H(+) = UDP-N-acetyl-alpha-D-glucosamine + diphosphate. It functions in the pathway nucleotide-sugar biosynthesis; UDP-N-acetyl-alpha-D-glucosamine biosynthesis; N-acetyl-alpha-D-glucosamine 1-phosphate from alpha-D-glucosamine 6-phosphate (route II): step 2/2. The protein operates within nucleotide-sugar biosynthesis; UDP-N-acetyl-alpha-D-glucosamine biosynthesis; UDP-N-acetyl-alpha-D-glucosamine from N-acetyl-alpha-D-glucosamine 1-phosphate: step 1/1. It participates in bacterial outer membrane biogenesis; LPS lipid A biosynthesis. Functionally, catalyzes the last two sequential reactions in the de novo biosynthetic pathway for UDP-N-acetylglucosamine (UDP-GlcNAc). The C-terminal domain catalyzes the transfer of acetyl group from acetyl coenzyme A to glucosamine-1-phosphate (GlcN-1-P) to produce N-acetylglucosamine-1-phosphate (GlcNAc-1-P), which is converted into UDP-GlcNAc by the transfer of uridine 5-monophosphate (from uridine 5-triphosphate), a reaction catalyzed by the N-terminal domain. This Streptomyces griseus subsp. griseus (strain JCM 4626 / CBS 651.72 / NBRC 13350 / KCC S-0626 / ISP 5235) protein is Bifunctional protein GlmU.